Reading from the N-terminus, the 351-residue chain is UPF0764 protein C16orf89 homolog (351 aa).

The first 25 residues, 1–25, serve as a signal peptide directing secretion; it reads MKSLKMLYPLFMLLVLSSKIDLSNQ.

Belongs to the UPF0764 family. As to quaternary structure, homodimer.

It is found in the secreted. This chain is UPF0764 protein C16orf89 homolog, found in Danio rerio (Zebrafish).